The sequence spans 471 residues: Putative multidrug resistance protein MdtD (471 aa).

Topologically, residues 1–11 (MTDLPDSTRWQ) are periplasmic. The helical transmembrane segment at 12 to 32 (LWIVAFGFFMQSLDTTIVNTA) threads the bilayer. The Cytoplasmic portion of the chain corresponds to 33-48 (LPSMAQSLGESPLHMH). The chain crosses the membrane as a helical span at residues 49-69 (MVIVSYVLTVAVMLPASGWLA). Residues 70–76 (DKVGVRN) are Periplasmic-facing. The chain crosses the membrane as a helical span at residues 77–97 (IFFTAIVLFTLGSLFCALSGT). Topologically, residues 98-101 (LNEL) are cytoplasmic. Residues 102–124 (LLARALQGVGGAMMVPVGRLTVM) form a helical membrane-spanning segment. Over 125–137 (KIVPREQYMAAMT) the chain is Periplasmic. The chain crosses the membrane as a helical span at residues 138-158 (FVTLPGQIGPLLGPALGGLLV). At 159-164 (EYASWH) the chain is on the cytoplasmic side. Residues 165–185 (WIFLINIPVGIIGAITTLMLM) traverse the membrane as a helical segment. The Periplasmic segment spans residues 186–196 (PNYTMQTRRFD). The chain crosses the membrane as a helical span at residues 197–217 (LSGFLLLAVGMAVLTLALDGS). Topologically, residues 218-224 (KGTGFSP) are cytoplasmic. Residues 225-245 (LAIAGLVAVGVVALVLYLLHA) form a helical membrane-spanning segment. Residues 246–262 (QNNNRALFSLKLFRTRT) are Periplasmic-facing. A helical transmembrane segment spans residues 263–283 (FSLGLAGSFAGRIGSGMLPFM). Residues 284–285 (TP) are Cytoplasmic-facing. A helical transmembrane segment spans residues 286–306 (VFLQIGFGFSPFHAGLMMIPM). Topologically, residues 307–341 (VLGSMGMKRIVVQVVNRFGYRRVLVATTLGLSLVT) are periplasmic. Residues 342-362 (LLFMTTALLGWYYVLPFVLFL) traverse the membrane as a helical segment. Topologically, residues 363-395 (QGMVNSTRFSSMNTLTLKDLPDNLASSGNSLLS) are cytoplasmic. A helical membrane pass occupies residues 396–416 (MIMQLSMSIGVTIAGLLLGLF). At 417–430 (GSQHVSVDSGTTQT) the chain is on the periplasmic side. The helical transmembrane segment at 431-451 (VFMYTWLSMASIIALPAFIFA) threads the bilayer. Residues 452-471 (RVPNDTHQNVAISRRKRSAQ) are Cytoplasmic-facing.

It belongs to the major facilitator superfamily. TCR/Tet family.

It localises to the cell inner membrane. The polypeptide is Putative multidrug resistance protein MdtD (Escherichia coli O6:H1 (strain CFT073 / ATCC 700928 / UPEC)).